Here is a 634-residue protein sequence, read N- to C-terminus: Bacteriophytochrome (634 aa).

Position 13 (Cys13) interacts with biliverdin IXalpha. Positions 13–118 (CAREPIHIPG…YPQQWLVEME (106 aa)) constitute a PAS 1 domain. The interval 13–514 (CAREPIHIPG…ELMERKRFQQ (502 aa)) is photosensory core domain. The region spanning 151-305 (RVAKGLRSLI…VTDAVARTLA (155 aa)) is the GAF domain. The tract at residues 325–508 (TVREKLITDF…SLRVLIELME (184 aa)) is phytochrome-specific (PHY). The tract at residues 452 to 480 (WAGNPQLAKLEDIPNSRLSPRKSFDLWQQ) is tongue domain. Positions 515-590 (DFTLLEASLS…ELLQDALRNG (76 aa)) constitute a PAS 2 domain. A PAS9, output module, not required to bind biliverdin IX-alpha, required for dimerization region spans residues 515–634 (DFTLLEASLS…HWLLQLRDPE (120 aa)).

This sequence in the N-terminal section; belongs to the phytochrome family. As to quaternary structure, forms head-to-head homodimers. In terms of processing, contains one covalently linked biliverdin IX-alpha chromophore; present in the crystal structure as a mixture of Pr and Meta-R configurations.

Photoreceptor which exists in two forms that are reversibly interconvertible by light: far-red light (733 nm) converts protein to the red-absorbing (Pr) form, while red light (630 nm) partly converts the protein to the far-red-absorbing (Pfr) form. Regulates virulence of X.campestris pv. campestris on its host plants, perhaps by fine-tuning expression to ambient light levels and/or spatial cues. The Pr form may sense light and partially inhibit virulence; in the dark (Pfr form) biofilm and xanathan production rise and bacteria are more virulent. Strains overexpressing this protein have significantly decreased amounts of extracellular beta-1,4-endoglucanase, produce less xanthin and have decreased transcription of genes involved in virulence such as endoglucanases, type 2 secretion systems, xanthan production and flagellar-dependent motility. The protein is Bacteriophytochrome (bphP) of Xanthomonas campestris pv. campestris (strain 8004).